Here is a 361-residue protein sequence, read N- to C-terminus: D-alanine--D-alanine ligase (361 aa).

Positions lysine 134–aspartate 344 constitute an ATP-grasp domain. Lysine 167–glutamate 222 contacts ATP. Positions 297, 311, and 313 each coordinate Mg(2+).

This sequence belongs to the D-alanine--D-alanine ligase family. It depends on Mg(2+) as a cofactor. Mn(2+) is required as a cofactor.

It localises to the cytoplasm. The enzyme catalyses 2 D-alanine + ATP = D-alanyl-D-alanine + ADP + phosphate + H(+). It functions in the pathway cell wall biogenesis; peptidoglycan biosynthesis. In terms of biological role, cell wall formation. The sequence is that of D-alanine--D-alanine ligase from Borreliella afzelii (strain PKo) (Borrelia afzelii).